The sequence spans 214 residues: Charged multivesicular body protein 2b (214 aa).

Residues 25 to 55 (QRTITRDRAALEKQERQLELEIKKMAKTGNK) are a coiled coil. Residues 179 to 201 (AKAPSAARGLPSASTSKASTISD) form a disordered region. Polar residues predominate over residues 190 to 199 (SASTSKASTI). The MIT-interacting motif signature appears at 202-212 (EEIERQLKALG).

The protein belongs to the SNF7 family. As to quaternary structure, probable core component of the endosomal sorting required for transport complex III (ESCRT-III). ESCRT-III components are thought to multimerize to form a flat lattice on the perimeter membrane of the endosome.

It localises to the cytoplasm. It is found in the cytosol. The protein localises to the late endosome membrane. In terms of biological role, probable core component of the endosomal sorting required for transport complex III (ESCRT-III) which is involved in multivesicular bodies (MVBs) formation and sorting of endosomal cargo proteins into MVBs. MVBs contain intraluminal vesicles (ILVs) that are generated by invagination and scission from the limiting membrane of the endosome and mostly are delivered to lysosomes enabling degradation of membrane proteins, such as stimulated growth factor receptors, lysosomal enzymes and lipids. This chain is Charged multivesicular body protein 2b (CHMP2B), found in Gallus gallus (Chicken).